We begin with the raw amino-acid sequence, 240 residues long: (DL)-glycerol-3-phosphatase 2 (240 aa).

The Nucleophile role is filled by aspartate 20. Positions 20, 22, and 185 each coordinate Mg(2+). Aspartate 22 serves as the catalytic Proton donor.

The protein belongs to the HAD-like hydrolase superfamily. DOG/GPP family. Mg(2+) is required as a cofactor. As to expression, ubiquitous with highest expression in siliques. Mainly restricted to the meristem of immature flower and vascular elements of the root, shoot, leave, siliqua and developing embryo (at the protein level).

It is found in the cytoplasm. It catalyses the reaction sn-glycerol 1-phosphate + H2O = glycerol + phosphate. The enzyme catalyses sn-glycerol 3-phosphate + H2O = glycerol + phosphate. Functionally, acts as a glycerol-3-phosphatase with higher stereospecificity for L-glycerol-3-phosphate than DL-glycerol-3-phosphate. This is (DL)-glycerol-3-phosphatase 2 (GPP2) from Arabidopsis thaliana (Mouse-ear cress).